Here is a 208-residue protein sequence, read N- to C-terminus: Pyridoxal 5'-phosphate synthase subunit PdxT (208 aa).

46–48 (GES) serves as a coordination point for L-glutamine. Residue Cys78 is the Nucleophile of the active site. L-glutamine is bound by residues Arg105 and 156 to 157 (IR). Catalysis depends on charge relay system residues His192 and Glu194.

It belongs to the glutaminase PdxT/SNO family. As to quaternary structure, in the presence of PdxS, forms a dodecamer of heterodimers. Only shows activity in the heterodimer.

The catalysed reaction is aldehydo-D-ribose 5-phosphate + D-glyceraldehyde 3-phosphate + L-glutamine = pyridoxal 5'-phosphate + L-glutamate + phosphate + 3 H2O + H(+). It catalyses the reaction L-glutamine + H2O = L-glutamate + NH4(+). It participates in cofactor biosynthesis; pyridoxal 5'-phosphate biosynthesis. Catalyzes the hydrolysis of glutamine to glutamate and ammonia as part of the biosynthesis of pyridoxal 5'-phosphate. The resulting ammonia molecule is channeled to the active site of PdxS. The sequence is that of Pyridoxal 5'-phosphate synthase subunit PdxT from Bifidobacterium adolescentis (strain ATCC 15703 / DSM 20083 / NCTC 11814 / E194a).